The primary structure comprises 216 residues: ATP synthase subunit a (216 aa).

The next 7 membrane-spanning stretches (helical) occupy residues 1 to 21 (MEYS…IFVL), 62 to 82 (LIAA…VPGF), 88 to 108 (NINT…FEGF), 119 to 139 (FMGP…ISHI), 149 to 169 (LFAN…LVIK), 174 to 194 (LVVS…AIFI), and 196 to 216 (TYIF…HEEH).

It belongs to the ATPase A chain family. F-type ATPases have 2 components, CF(1) - the catalytic core - and CF(0) - the membrane proton channel. CF(1) has five subunits: alpha(3), beta(3), gamma(1), delta(1), epsilon(1). CF(0) has three main subunits: a(1), b(2) and c(9-12). The alpha and beta chains form an alternating ring which encloses part of the gamma chain. CF(1) is attached to CF(0) by a central stalk formed by the gamma and epsilon chains, while a peripheral stalk is formed by the delta and b chains.

It is found in the cell inner membrane. Its function is as follows. Key component of the proton channel; it plays a direct role in the translocation of protons across the membrane. The protein is ATP synthase subunit a of Aquifex aeolicus (strain VF5).